The chain runs to 465 residues: tRNA modification GTPase MnmE (465 aa).

3 residues coordinate (6S)-5-formyl-5,6,7,8-tetrahydrofolate: R27, E91, and R130. The region spanning 227 to 386 (GLSTAIIGRP…LEAKIADLFF (160 aa)) is the TrmE-type G domain. Residue N237 participates in K(+) binding. Residues 237 to 242 (NVGKSS), 256 to 262 (TDIAGTT), and 281 to 284 (DTAG) contribute to the GTP site. Position 241 (S241) interacts with Mg(2+). K(+)-binding residues include T256, I258, and T261. Residue T262 participates in Mg(2+) binding. K465 lines the (6S)-5-formyl-5,6,7,8-tetrahydrofolate pocket.

The protein belongs to the TRAFAC class TrmE-Era-EngA-EngB-Septin-like GTPase superfamily. TrmE GTPase family. Homodimer. Heterotetramer of two MnmE and two MnmG subunits. Requires K(+) as cofactor.

It localises to the cytoplasm. Its function is as follows. Exhibits a very high intrinsic GTPase hydrolysis rate. Involved in the addition of a carboxymethylaminomethyl (cmnm) group at the wobble position (U34) of certain tRNAs, forming tRNA-cmnm(5)s(2)U34. The sequence is that of tRNA modification GTPase MnmE from Enterococcus faecalis (strain ATCC 700802 / V583).